Reading from the N-terminus, the 620-residue chain is Extensin (620 aa).

A signal peptide spans 1 to 20 (MKLSTLFALVLLLQSTAILS). Residues 34–45 (LPPPVTSQPPPS) show a composition bias toward pro residues. Residues 34–620 (LPPPVTSQPP…PPYGLLLSTP (587 aa)) are disordered. An H-A-P-P repeat occupies 70-73 (HAPP). Residues 106–129 (NPPPSPVISPSHPPPSYGAPPPSH) are compositionally biased toward pro residues. Over residues 145–163 (SHGHAPPSGGHTPPRGQHP) the composition is skewed to low complexity. The stretch at 148 to 151 (HAPP) is one H-A-P-P repeat. Basic residues predominate over residues 164-177 (PSHRRPSPPSRHGH). The span at 178 to 219 (PPPPTYAQPPPTPIYSPSPQVQPPPTYSPPPPTHVQPTPSPP) shows a compositional bias: pro residues. Residues 205-620 (SPPPPTHVQP…PPYGLLLSTP (416 aa)) are contains the Ser-Pro(4) repeats. Repeat copies occupy residues 229–235 (THRHAPP) and 236–242 (THRHAPP). Positions 229–241 (THRHAPPTHRHAP) are enriched in basic residues. The segment at 229 to 242 (THRHAPPTHRHAPP) is 2 X 7 AA tandem repeats of T-H-R-H-A-P-P. Composition is skewed to pro residues over residues 251-552 (HLPP…PPHW) and 562-613 (GQPP…PPPY). Positions 499–600 (PPTFSPPPPR…PTPTYGQPPS (102 aa)) are 3 X approximate tandem repeats.

In terms of processing, hydroxylated on proline residues in the S-P-P-P-P repeat. Post-translationally, O-glycosylated on hydroxyprolines. Expressed in the tip of the emerging lateral roots.

The protein resides in the secreted. It localises to the primary cell wall. Has a specialized structural function, possibly in the mechanical penetration of the cortex and epidermis of the main root. In Nicotiana tabacum (Common tobacco), this protein is Extensin (HRGPNT3).